The following is a 303-amino-acid chain: MKITVLGCGALGQLWLSALCKHGHDVQGWLRVPQPYCSVNLIDTDGSFFNESLTANDPDFLAKSELLLVTLKAWQVSDAVRTLASTLPVTSPILLIHNGMGTIEELQNIQQPMLMGTITHAARRDGNIIIHVANGTTHIGPAREQDGDYSYLADILQGVLPDVAWHNNIRAEMWRKLAVNCVINPLTALWNCPNGELRHHTDEINAICEEVAAVIEREGYHTSADDLRYYVEQVIDSTAENISSMLQDVRAMRHTEIDYITGYLLKRARVHGLAVPENSRLFEMVKRKESEYERSGTGMPRPW.

NADP(+) is bound by residues 7-12 (GCGALG), Asn-98, and Ala-122. Residue Asn-98 participates in substrate binding. Lys-176 serves as the catalytic Proton donor. Asn-180, Asn-184, Asn-194, and Ser-244 together coordinate substrate. Glu-256 serves as a coordination point for NADP(+).

The protein belongs to the ketopantoate reductase family. In terms of assembly, monomer.

Its subcellular location is the cytoplasm. It catalyses the reaction (R)-pantoate + NADP(+) = 2-dehydropantoate + NADPH + H(+). The protein operates within cofactor biosynthesis; (R)-pantothenate biosynthesis; (R)-pantoate from 3-methyl-2-oxobutanoate: step 2/2. Its function is as follows. Catalyzes the NADPH-dependent reduction of ketopantoate into pantoic acid. Has a strong preference for NADPH over NADH as the electron acceptor. Pantoate, ketoisovalerate, oxaloacetate, pyruvate, 3-hydroxypyruvate, alpha-ketoglutarate, alpha-ketobutyrate, and acetaldehyde cannot serve as substrates for reduction. The polypeptide is 2-dehydropantoate 2-reductase (Salmonella typhimurium (strain LT2 / SGSC1412 / ATCC 700720)).